The chain runs to 538 residues: Chaperonin GroEL 1 (538 aa).

Residues 30–33, Lys51, 87–91, Gly415, 479–481, and Asp495 each bind ATP; these read TLGP, DGTTT, and NAA.

It belongs to the chaperonin (HSP60) family. Forms a cylinder of 14 subunits composed of two heptameric rings stacked back-to-back. Interacts with the co-chaperonin GroES.

Its subcellular location is the cytoplasm. The enzyme catalyses ATP + H2O + a folded polypeptide = ADP + phosphate + an unfolded polypeptide.. Functionally, together with its co-chaperonin GroES, plays an essential role in assisting protein folding. The GroEL-GroES system forms a nano-cage that allows encapsulation of the non-native substrate proteins and provides a physical environment optimized to promote and accelerate protein folding. The polypeptide is Chaperonin GroEL 1 (Chromobacterium violaceum (strain ATCC 12472 / DSM 30191 / JCM 1249 / CCUG 213 / NBRC 12614 / NCIMB 9131 / NCTC 9757 / MK)).